The primary structure comprises 105 residues: Small ribosomal subunit protein uS10c (105 aa).

It belongs to the universal ribosomal protein uS10 family. Part of the 30S ribosomal subunit.

The protein resides in the plastid. It is found in the chloroplast. Involved in the binding of tRNA to the ribosomes. The polypeptide is Small ribosomal subunit protein uS10c (Gracilaria tenuistipitata var. liui (Red alga)).